The sequence spans 412 residues: MIGTFTYLDPTIQADPNLLFFYFDFDAFFASVEEIENPELKNQPLIVGNRTSRSVVSTCNYLARSYGIKSGMPIAKALELCPQAIFATSHFRNYRKYSAKIFAMIAEQFNLEVHTLSIDEGFVCFRDLSPRKAFSLAKRIQRHVYEQLNFHISIGISNQFTLAKIFSNQAKPFGVKSCFSKEVKRKLWPLPIVELPGIGKRQLDNAFKNNFHKIGDLAKCKDVTLFKRVFGIAWESLHAVALGETYTQSEQDVKSRSIAVSETLEYLNYSSNQLQQKLTSIFNELYARLQLSFQMCKGVVVQLKSNDFIVNSHSQSIKKYTADYQTLLVIVKKLFNRLLMGVGLNIRLIGVSFFGLKNNPSSSRPEGLLFYEYQQAKPKQQTAHFALDQMIYEINQSFGYEIIQRAKKLAAS.

The UmuC domain occupies 20–199; sequence FFYFDFDAFF…LPIVELPGIG (180 aa).

Belongs to the DNA polymerase type-Y family.

This is an uncharacterized protein from Mycoplasma pneumoniae (strain ATCC 29342 / M129 / Subtype 1) (Mycoplasmoides pneumoniae).